Here is a 396-residue protein sequence, read N- to C-terminus: Coiled-coil domain-containing protein 1 (396 aa).

A signal peptide spans Met1 to Gly21. Coiled-coil stretches lie at residues Lys53–Asp73, Glu109–Asp129, Asp208–Thr242, and Tyr287–His308. The segment covering Asp231 to Asp256 has biased composition (acidic residues). Disordered regions lie at residues Asp231–His260 and Glu288–Asp378.

In terms of tissue distribution, component of the acid-insoluble and acid-soluble organic matrix of calcified layers of the shell (at protein level).

It is found in the secreted. This is Coiled-coil domain-containing protein 1 from Lottia gigantea (Giant owl limpet).